The following is a 352-amino-acid chain: Respiratory nitrate reductase subunit beta (352 aa).

The 4Fe-4S ferredoxin-type 1 domain occupies 20-48 (VAMVMDLNKCIGCQTCTVACKSLWTEGGG). [4Fe-4S] cluster is bound by residues cysteine 29, cysteine 32, cysteine 35, and cysteine 39. 2 disordered regions span residues 63 to 95 (KGYP…KEDY) and 111 to 131 (SDRP…DEDQ). Basic and acidic residues predominate over residues 78–95 (SSEHKERKPGQIPDKEDY). 4Fe-4S ferredoxin-type domains follow at residues 139-170 (SYYF…KREE) and 172-201 (GIVL…YNAT). [4Fe-4S] cluster is bound by residues cysteine 148, cysteine 151, and cysteine 156. 3 residues coordinate [3Fe-4S] cluster: cysteine 160, cysteine 181, and cysteine 187. Residues cysteine 191, cysteine 208, cysteine 211, cysteine 229, and cysteine 233 each contribute to the [4Fe-4S] cluster site.

As to quaternary structure, probable multiprotein complex; a catalytic heterodimer of an alpha and beta chain is proposed to associate with additional subunits involved in membrane attachment and electron transfer. [4Fe-4S] cluster is required as a cofactor. The cofactor is [3Fe-4S] cluster.

It localises to the cell membrane. It carries out the reaction nitrate + a quinol = a quinone + nitrite + H2O. Inhibited by cyanide, azide and antimycin A. Enzyme stability is not dependent on salt concentration. The respiratory membrane-bound nitrate reductase enzyme complex plays a role in generation of metabolic energy by using nitrate as a terminal electron acceptor during anaerobic conditions. The beta chain is an electron transfer unit containing four cysteine clusters involved in the formation of iron-sulfur centers. The protein is Respiratory nitrate reductase subunit beta (narH) of Haloferax mediterranei (strain ATCC 33500 / DSM 1411 / JCM 8866 / NBRC 14739 / NCIMB 2177 / R-4) (Halobacterium mediterranei).